The chain runs to 685 residues: MEINHPDQLSVEHPTPPGDSSSLNQNGPGKQDGERCSTSGQAPEQEGSLHPEKGAHDVAEELSRQLEDIISTYGSAASPRGKESTSETKEQPPNTEAPDNEDVDYEETTEEIDREPTAPEEPAAAKEPVSNKEQKLEKKILKGLGKEANLLMQNLNKLQAPEEKLDFLFKKYTELLDEHRTEQKKLKLLLKQQAQTQREKDQLQSEHNRAVLARSKLESLCRELQRHNKTLKEETLQRAREEEEKRKEITSHFQTTLTDIQTQIEQQSERNMKLCQENTELAEKLKSIIDQYELREEHLDKIFKHRELQQKLVDAKLEEAQELMQEAEERHRREKEYLLNQAAEWKLQAKVLKEQETVLQAQLTLYSGRFEEFQSTLTKSNEVFATFKQEMDKTTKKMKKLEKDTATWKARFENCNKALLDMIEEKALRAKEYECFVMKIQRLENLCRALQEERKELYKKIREAKMSEKEDQVQRTSEEEPEPSVSENEEVDAEEANSFQKAVENLATAFTILHHPEFTPDQPTERQLAVNGPQSGSDVTHQHPETARLNHPSLPADSGSPRPPVGAQAVAEGVCEATPAPTASCTPAEAELQSQGLPAENTPGPKPHKPEANTSGQAPLSPAQGSLSVVEAKYDISPSPESEGDSAVVPGCESREQPPPEVTDIPVGPSTGLPREPDACLNGVD.

Residues 1–135 are disordered; it reads MEINHPDQLS…KEPVSNKEQK (135 aa). Over residues 18–28 the composition is skewed to polar residues; the sequence is GDSSSLNQNGP. 2 stretches are compositionally biased toward basic and acidic residues: residues 47 to 67 and 80 to 90; these read GSLH…RQLE and RGKESTSETKE. The segment covering 98 to 113 has biased composition (acidic residues); sequence PDNEDVDYEETTEEID. Coiled-coil stretches lie at residues 138–354 and 381–470; these read KKIL…VLKE and NEVF…SEKE. Positions 465 to 478 are enriched in basic and acidic residues; it reads KMSEKEDQVQRTSE. 2 disordered regions span residues 465–497 and 517–685; these read KMSE…EEAN and EFTP…NGVD. 3 positions are modified to phosphoserine: S477, S484, and S486. The segment covering 479–495 has biased composition (acidic residues); it reads EEPEPSVSENEEVDAEE. The span at 575–591 shows a compositional bias: low complexity; it reads CEATPAPTASCTPAEAE. A compositionally biased stretch (polar residues) spans 612-627; the sequence is ANTSGQAPLSPAQGSL.

It belongs to the taxilin family. As to quaternary structure, binds to the C-terminal coiled coil region of syntaxin family members STX1A, STX3A and STX4A. Has a preference for STX1A. Specifically expressed in skeletal muscle.

Its function is as follows. Promotes motor nerve regeneration. May be involved in intracellular vesicle traffic. The polypeptide is Beta-taxilin (Txlnb) (Mus musculus (Mouse)).